Reading from the N-terminus, the 451-residue chain is Bifunctional protein GlmU (451 aa).

The interval 1 to 229 (MQRHAIVLAA…FEEIMGVNDR (229 aa)) is pyrophosphorylase. UDP-N-acetyl-alpha-D-glucosamine is bound by residues 8–11 (LAAG), K22, Q72, and 77–78 (GT). A Mg(2+)-binding site is contributed by D102. 3 residues coordinate UDP-N-acetyl-alpha-D-glucosamine: G139, E154, and N227. Position 227 (N227) interacts with Mg(2+). The interval 230 to 250 (VMLSEAEKAFRKRINEQHMKN) is linker. An N-acetyltransferase region spans residues 251-451 (GVTIIDPVTT…QTTKEGYLKK (201 aa)). UDP-N-acetyl-alpha-D-glucosamine-binding residues include R332 and K350. H362 serves as the catalytic Proton acceptor. Residues Y365 and N376 each contribute to the UDP-N-acetyl-alpha-D-glucosamine site. Residues 385-386 (NY), A422, and R439 contribute to the acetyl-CoA site.

This sequence in the N-terminal section; belongs to the N-acetylglucosamine-1-phosphate uridyltransferase family. It in the C-terminal section; belongs to the transferase hexapeptide repeat family. Homotrimer. Requires Mg(2+) as cofactor.

It localises to the cytoplasm. The catalysed reaction is alpha-D-glucosamine 1-phosphate + acetyl-CoA = N-acetyl-alpha-D-glucosamine 1-phosphate + CoA + H(+). It catalyses the reaction N-acetyl-alpha-D-glucosamine 1-phosphate + UTP + H(+) = UDP-N-acetyl-alpha-D-glucosamine + diphosphate. Its pathway is nucleotide-sugar biosynthesis; UDP-N-acetyl-alpha-D-glucosamine biosynthesis; N-acetyl-alpha-D-glucosamine 1-phosphate from alpha-D-glucosamine 6-phosphate (route II): step 2/2. The protein operates within nucleotide-sugar biosynthesis; UDP-N-acetyl-alpha-D-glucosamine biosynthesis; UDP-N-acetyl-alpha-D-glucosamine from N-acetyl-alpha-D-glucosamine 1-phosphate: step 1/1. It participates in bacterial outer membrane biogenesis; LPS lipid A biosynthesis. Catalyzes the last two sequential reactions in the de novo biosynthetic pathway for UDP-N-acetylglucosamine (UDP-GlcNAc). The C-terminal domain catalyzes the transfer of acetyl group from acetyl coenzyme A to glucosamine-1-phosphate (GlcN-1-P) to produce N-acetylglucosamine-1-phosphate (GlcNAc-1-P), which is converted into UDP-GlcNAc by the transfer of uridine 5-monophosphate (from uridine 5-triphosphate), a reaction catalyzed by the N-terminal domain. The polypeptide is Bifunctional protein GlmU (Staphylococcus saprophyticus subsp. saprophyticus (strain ATCC 15305 / DSM 20229 / NCIMB 8711 / NCTC 7292 / S-41)).